Here is a 147-residue protein sequence, read N- to C-terminus: Protein SprT-like (147 aa).

Residues Ala9–Leu142 enclose the SprT-like domain. His65 lines the Zn(2+) pocket. Residue Glu66 is part of the active site. Residue His69 participates in Zn(2+) binding.

It belongs to the SprT family. The cofactor is Zn(2+).

It localises to the cytoplasm. The sequence is that of Protein SprT-like (yciD) from Lactococcus lactis subsp. lactis (strain IL1403) (Streptococcus lactis).